The primary structure comprises 453 residues: Cysteine desulfurase, mitochondrial (453 aa).

A mitochondrion-targeting transit peptide spans 1-34 (MASKVISATIRRTLTKPHGTFSRCRYLSTAAAAT). Residues 123-124 (AT), Asn203, Gln231, and 251-253 (SAH) contribute to the pyridoxal 5'-phosphate site. Lys254 is modified (N6-(pyridoxal phosphate)lysine). Thr291 contributes to the pyridoxal 5'-phosphate binding site. The active-site Cysteine persulfide intermediate is Cys377. Cys377 lines the [2Fe-2S] cluster pocket.

The protein belongs to the class-V pyridoxal-phosphate-dependent aminotransferase family. NifS/IscS subfamily. As to quaternary structure, interacts with FH. Interacts with SUFE1. Pyridoxal 5'-phosphate serves as cofactor.

It is found in the mitochondrion. It catalyses the reaction (sulfur carrier)-H + L-cysteine = (sulfur carrier)-SH + L-alanine. Its activity is regulated as follows. Threefold increase in the catalytic activity in the presence of FH (frataxin). 30-fold increase in the catalytic activity in the presence of SUFE1. Catalyzes the removal of elemental sulfur from cysteine to produce alanine. Supplies the inorganic sulfur for iron-sulfur (Fe-S) clusters. This is Cysteine desulfurase, mitochondrial from Arabidopsis thaliana (Mouse-ear cress).